The chain runs to 376 residues: N-glycosylase/DNA lyase (376 aa).

DNA contacts are provided by asparagine 134, arginine 139, and arginine 189. Catalysis depends on lysine 241, which acts as the Schiff-base intermediate with DNA. 8-oxoguanine-binding residues include proline 258 and aspartate 260. A DNA-binding site is contributed by histidine 262. The 8-oxoguanine site is built by glutamine 320 and phenylalanine 324.

It belongs to the type-1 OGG1 family.

It localises to the nucleus. It carries out the reaction 2'-deoxyribonucleotide-(2'-deoxyribose 5'-phosphate)-2'-deoxyribonucleotide-DNA = a 3'-end 2'-deoxyribonucleotide-(2,3-dehydro-2,3-deoxyribose 5'-phosphate)-DNA + a 5'-end 5'-phospho-2'-deoxyribonucleoside-DNA + H(+). Functionally, DNA repair enzyme that incises DNA at 8-oxoG residues. Excises 7,8-dihydro-8-oxoguanine and 2,6-diamino-4-hydroxy-5-N-methylformamidopyrimidine (FAPY) from damaged DNA. Has a beta-lyase activity that nicks DNA 3' to the lesion. In Saccharomyces cerevisiae (strain ATCC 204508 / S288c) (Baker's yeast), this protein is N-glycosylase/DNA lyase (OGG1).